The following is a 35-amino-acid chain: Z-limacoditoxin(1)-Dv4 (35 aa).

The N-terminal stretch at 1–22 (MKKTFLPIFLVILLASYALGNP) is a signal peptide. Position 23 is a pyrrolidone carboxylic acid (Q23). P32 carries the post-translational modification Proline amide.

The protein belongs to the limacoditoxin-1 (ACP-like) family. Expressed by the venom secretory cell of the spine. The spine is a cuticular structure containing a single large nucleated venom-secreting cell at its base. It is an independent unit capable of producing, storing and injecting venom. On the back of D.vulnerans caterpillars, spines are grouped together by 50 to 100 to form scoli, of which there are eight in D.vulnerans.

Its subcellular location is the secreted. Potently activates insect GPCR. More precisely, it activates the ACP receptor (ACPR) from the mosquito A.aegypti (EC(50)=3.07 nM) with a potency comparable to that of the endogenous ligand. Has no activity on receptors of the closely related neuropeptides adipokinetic hormone and corazonin. In vivo, does not reveal any observable effects when injected into crickets (A.domesticus). Does not induce increase in intracellular calcium in mouse DRG neurons, suggesting that it does not induce pain. This Doratifera vulnerans (Mottled cup moth) protein is Z-limacoditoxin(1)-Dv4.